We begin with the raw amino-acid sequence, 415 residues long: Dihydroorotase (415 aa).

Zn(2+)-binding residues include H54 and H56. Substrate contacts are provided by residues H56–R58 and N88. Positions 136, 169, 217, and 278 each coordinate Zn(2+). K136 is subject to N6-carboxylysine. D278 is a catalytic residue. H282 contributes to the substrate binding site.

The protein belongs to the metallo-dependent hydrolases superfamily. DHOase family. Class I DHOase subfamily. Zn(2+) serves as cofactor.

It carries out the reaction (S)-dihydroorotate + H2O = N-carbamoyl-L-aspartate + H(+). Its pathway is pyrimidine metabolism; UMP biosynthesis via de novo pathway; (S)-dihydroorotate from bicarbonate: step 3/3. In terms of biological role, catalyzes the reversible cyclization of carbamoyl aspartate to dihydroorotate. The chain is Dihydroorotase from Thermoplasma volcanium (strain ATCC 51530 / DSM 4299 / JCM 9571 / NBRC 15438 / GSS1).